Here is a 478-residue protein sequence, read N- to C-terminus: Subtilisin-like protease 3 (478 aa).

Residues 1–17 (MKFSTILPILWANCCLC) form the signal peptide. The Inhibitor I9 domain occupies 70–167 (RYVIVFNEDI…FVEQETTVKI (98 aa)). One can recognise a Peptidase S8 domain in the interval 177–478 (PWGLHRVSHR…GGGKKLDGFW (302 aa)). Active-site charge relay system residues include aspartate 213, histidine 245, and serine 407.

Belongs to the peptidase S8 family.

Its function is as follows. Serine protease with unknown substrate. This is Subtilisin-like protease 3 (YSP3) from Saccharomyces cerevisiae (strain ATCC 204508 / S288c) (Baker's yeast).